A 238-amino-acid polypeptide reads, in one-letter code: Uridylate kinase (238 aa).

12-15 (KLSG) is a binding site for ATP. Gly-54 is a UMP binding site. ATP contacts are provided by Gly-55 and Arg-59. UMP-binding positions include Asp-74 and 135-142 (TGNPYFST). Tyr-168 and Asp-171 together coordinate ATP.

This sequence belongs to the UMP kinase family. In terms of assembly, homohexamer.

The protein localises to the cytoplasm. It catalyses the reaction UMP + ATP = UDP + ADP. The protein operates within pyrimidine metabolism; CTP biosynthesis via de novo pathway; UDP from UMP (UMPK route): step 1/1. Its activity is regulated as follows. Inhibited by UTP. In terms of biological role, catalyzes the reversible phosphorylation of UMP to UDP. This Syntrophomonas wolfei subsp. wolfei (strain DSM 2245B / Goettingen) protein is Uridylate kinase.